The sequence spans 461 residues: Bifunctional protein HldE (461 aa).

Positions 1–312 (MLEFLSQQKP…IKSFNRVDFE (312 aa)) are ribokinase. ATP is bound at residue 191–194 (NKKE). The active site involves Asp259. The cytidylyltransferase stretch occupies residues 334 to 461 (FTNGCFDIVH…KIIEKIKDKK (128 aa)).

It in the N-terminal section; belongs to the carbohydrate kinase PfkB family. This sequence in the C-terminal section; belongs to the cytidylyltransferase family. In terms of assembly, homodimer.

The enzyme catalyses D-glycero-beta-D-manno-heptose 7-phosphate + ATP = D-glycero-beta-D-manno-heptose 1,7-bisphosphate + ADP + H(+). It catalyses the reaction D-glycero-beta-D-manno-heptose 1-phosphate + ATP + H(+) = ADP-D-glycero-beta-D-manno-heptose + diphosphate. Its pathway is nucleotide-sugar biosynthesis; ADP-L-glycero-beta-D-manno-heptose biosynthesis; ADP-L-glycero-beta-D-manno-heptose from D-glycero-beta-D-manno-heptose 7-phosphate: step 1/4. It functions in the pathway nucleotide-sugar biosynthesis; ADP-L-glycero-beta-D-manno-heptose biosynthesis; ADP-L-glycero-beta-D-manno-heptose from D-glycero-beta-D-manno-heptose 7-phosphate: step 3/4. Catalyzes the phosphorylation of D-glycero-D-manno-heptose 7-phosphate at the C-1 position to selectively form D-glycero-beta-D-manno-heptose-1,7-bisphosphate. Its function is as follows. Catalyzes the ADP transfer from ATP to D-glycero-beta-D-manno-heptose 1-phosphate, yielding ADP-D-glycero-beta-D-manno-heptose. The sequence is that of Bifunctional protein HldE from Campylobacter jejuni subsp. doylei (strain ATCC BAA-1458 / RM4099 / 269.97).